Here is a 466-residue protein sequence, read N- to C-terminus: Vacuolar protein sorting-associated protein 30 (466 aa).

Residues 35–55 (SETNTDNSDNNKHNGENDRNI) form a disordered region. Residues 43–53 (DNNKHNGENDR) show a composition bias toward basic and acidic residues. A coiled-coil region spans residues 149 to 258 (DTLLEKLKEE…QMEHLSFIKD (110 aa)). Residues 279-463 (LNIYNETFRI…LAFSTSRINK (185 aa)) are BARA. The required for membrane-association, autophagic function during starvation and normal autophagosome morphology stretch occupies residues 439-464 (WTTACKFLLTNIKWLLAFSTSRINKA).

The protein belongs to the beclin family. Component of the autophagy-specific VPS34 PI3-kinase complex I; and of the VPS34 PI3-kinase complex II.

The protein resides in the endosome membrane. Its subcellular location is the vacuole membrane. It is found in the preautophagosomal structure membrane. In terms of biological role, required for cytoplasm to vacuole transport (Cvt), autophagy, nucleophagy, and mitophagy, as a part of the autophagy-specific VPS34 PI3-kinase complex I. This complex is essential to recruit the ATG8-phosphatidylinositol conjugate and the ATG12-ATG5 conjugate to the pre-autophagosomal structure. Also involved in endosome-to-Golgi retrograde transport as part of the VPS34 PI3-kinase complex II. This Kluyveromyces marxianus (strain DMKU3-1042 / BCC 29191 / NBRC 104275) (Yeast) protein is Vacuolar protein sorting-associated protein 30.